Reading from the N-terminus, the 168-residue chain is Transcription antitermination protein NusB (168 aa).

Residues 147 to 168 form a disordered region; sequence RGLINNSSRNTSRSEEKHSTEK. Positions 158–168 are enriched in basic and acidic residues; it reads SRSEEKHSTEK.

Belongs to the NusB family.

Functionally, involved in transcription antitermination. Required for transcription of ribosomal RNA (rRNA) genes. Binds specifically to the boxA antiterminator sequence of the ribosomal RNA (rrn) operons. This chain is Transcription antitermination protein NusB, found in Chlorobium phaeobacteroides (strain BS1).